Reading from the N-terminus, the 124-residue chain is Fluoride-specific ion channel FluC (124 aa).

4 consecutive transmembrane segments (helical) span residues 4–24 (LLFV…MSII), 35–55 (FGTL…YALG), 62–82 (PELK…FSTF), and 95–115 (WFKS…MVYL). Positions 74 and 77 each coordinate Na(+).

This sequence belongs to the fluoride channel Fluc/FEX (TC 1.A.43) family.

Its subcellular location is the cell inner membrane. It catalyses the reaction fluoride(in) = fluoride(out). Its activity is regulated as follows. Na(+) is not transported, but it plays an essential structural role and its presence is essential for fluoride channel function. Its function is as follows. Fluoride-specific ion channel. Important for reducing fluoride concentration in the cell, thus reducing its toxicity. The chain is Fluoride-specific ion channel FluC from Shewanella denitrificans (strain OS217 / ATCC BAA-1090 / DSM 15013).